The sequence spans 2312 residues: Protein Ycf2 (2312 aa).

1630–1637 (GSIGTGRS) is a binding site for ATP.

This sequence belongs to the Ycf2 family.

It localises to the plastid. Its subcellular location is the chloroplast stroma. In terms of biological role, probable ATPase of unknown function. Its presence in a non-photosynthetic plant (Epifagus virginiana) and experiments in tobacco indicate that it has an essential function which is probably not related to photosynthesis. The sequence is that of Protein Ycf2 from Manihot esculenta (Cassava).